The primary structure comprises 452 residues: tRNA modification GTPase MnmE (452 aa).

(6S)-5-formyl-5,6,7,8-tetrahydrofolate is bound by residues R21, E78, and K118. In terms of domain architecture, TrmE-type G spans 214–375 (GMKVVIAGRP…LREHLKQSMG (162 aa)). A K(+)-binding site is contributed by N224. Residues 224–229 (NAGKSS), 243–249 (TDIAGTT), and 268–271 (DTAG) each bind GTP. S228 serves as a coordination point for Mg(2+). The K(+) site is built by T243, I245, and T248. T249 serves as a coordination point for Mg(2+). K452 lines the (6S)-5-formyl-5,6,7,8-tetrahydrofolate pocket.

The protein belongs to the TRAFAC class TrmE-Era-EngA-EngB-Septin-like GTPase superfamily. TrmE GTPase family. In terms of assembly, homodimer. Heterotetramer of two MnmE and two MnmG subunits. K(+) is required as a cofactor.

It is found in the cytoplasm. Exhibits a very high intrinsic GTPase hydrolysis rate. Involved in the addition of a carboxymethylaminomethyl (cmnm) group at the wobble position (U34) of certain tRNAs, forming tRNA-cmnm(5)s(2)U34. The protein is tRNA modification GTPase MnmE of Actinobacillus succinogenes (strain ATCC 55618 / DSM 22257 / CCUG 43843 / 130Z).